Here is a 704-residue protein sequence, read N- to C-terminus: Elongation factor G (704 aa).

In terms of domain architecture, tr-type G spans 8 to 291 (DRVRNIGIMA…AVIEYLASPV (284 aa)). Residues 17-24 (AHIDAGKT), 90-94 (DTPGH), and 144-147 (NKMD) each bind GTP.

The protein belongs to the TRAFAC class translation factor GTPase superfamily. Classic translation factor GTPase family. EF-G/EF-2 subfamily.

Its subcellular location is the cytoplasm. Functionally, catalyzes the GTP-dependent ribosomal translocation step during translation elongation. During this step, the ribosome changes from the pre-translocational (PRE) to the post-translocational (POST) state as the newly formed A-site-bound peptidyl-tRNA and P-site-bound deacylated tRNA move to the P and E sites, respectively. Catalyzes the coordinated movement of the two tRNA molecules, the mRNA and conformational changes in the ribosome. This is Elongation factor G from Chlorobium chlorochromatii (strain CaD3).